The sequence spans 782 residues: Isoamylase 3, chloroplastic (782 aa).

Residues 1–68 constitute a chloroplast transit peptide; it reads MDSIGINRAP…EKVRRFDSVR (68 aa). Residues 68–81 show a composition bias toward polar residues; the sequence is RSTTARAQNGNAGR. Residues 68-88 form a disordered region; sequence RSTTARAQNGNAGRSMTEERG. Asp445 (nucleophile) is an active-site residue. The active-site Proton donor is the Glu482.

The protein belongs to the glycosyl hydrolase 13 family. Expressed in leaves. Expressed at low levels in developing endosperm.

It is found in the plastid. It localises to the chloroplast. Its subcellular location is the amyloplast. The enzyme catalyses Hydrolysis of (1-&gt;6)-alpha-D-glucosidic branch linkages in glycogen, amylopectin and their beta-limit dextrins.. Its function is as follows. Starch-debranching enzyme that plays a role in the degradation of transitory starch during the night in leaf blades, facilitates the formation of spherical amyloplasts containing compound granules in the endosperm, and affects morphological characteristics of plastids. This chain is Isoamylase 3, chloroplastic, found in Oryza sativa subsp. japonica (Rice).